Here is a 360-residue protein sequence, read N- to C-terminus: Dihydroorotate dehydrogenase (quinone) (360 aa).

Residues 67–71 and T91 contribute to the FMN site; that span reads AGLDK. K71 contributes to the substrate binding site. 116-120 serves as a coordination point for substrate; that stretch reads NRMGF. 2 residues coordinate FMN: N145 and N176. Position 176 (N176) interacts with substrate. The Nucleophile role is filled by S179. Substrate is bound at residue N181. 2 residues coordinate FMN: K222 and S250. Residue 251–252 participates in substrate binding; it reads NT. FMN-binding positions include G272, G301, and 322-323; that span reads YS.

Belongs to the dihydroorotate dehydrogenase family. Type 2 subfamily. In terms of assembly, monomer. Requires FMN as cofactor.

The protein localises to the cell membrane. It catalyses the reaction (S)-dihydroorotate + a quinone = orotate + a quinol. It functions in the pathway pyrimidine metabolism; UMP biosynthesis via de novo pathway; orotate from (S)-dihydroorotate (quinone route): step 1/1. Functionally, catalyzes the conversion of dihydroorotate to orotate with quinone as electron acceptor. In Deinococcus deserti (strain DSM 17065 / CIP 109153 / LMG 22923 / VCD115), this protein is Dihydroorotate dehydrogenase (quinone).